Consider the following 251-residue polypeptide: Ribonuclease 3 (251 aa).

The RNase III domain occupies 3-125 (LATLETRLGH…LFGAVFLDAG (123 aa)). Glutamate 38 is a Mg(2+) binding site. Aspartate 42 is a catalytic residue. 2 residues coordinate Mg(2+): aspartate 111 and glutamate 114. Glutamate 114 is a catalytic residue. One can recognise a DRBM domain in the interval 152-222 (DAKTLLQEFL…AKLALEAALV (71 aa)).

The protein belongs to the ribonuclease III family. Homodimer. Requires Mg(2+) as cofactor.

The protein resides in the cytoplasm. The enzyme catalyses Endonucleolytic cleavage to 5'-phosphomonoester.. Its function is as follows. Digests double-stranded RNA. Involved in the processing of primary rRNA transcript to yield the immediate precursors to the large and small rRNAs (23S and 16S). Processes some mRNAs, and tRNAs when they are encoded in the rRNA operon. Processes pre-crRNA and tracrRNA of type II CRISPR loci if present in the organism. This chain is Ribonuclease 3, found in Bordetella avium (strain 197N).